Here is a 283-residue protein sequence, read N- to C-terminus: Shikimate kinase (283 aa).

86–96 lines the ATP pocket; it reads PLKSGLSSSSA.

Belongs to the GHMP kinase family. Archaeal shikimate kinase subfamily.

It is found in the cytoplasm. The catalysed reaction is shikimate + ATP = 3-phosphoshikimate + ADP + H(+). The protein operates within metabolic intermediate biosynthesis; chorismate biosynthesis; chorismate from D-erythrose 4-phosphate and phosphoenolpyruvate: step 5/7. This chain is Shikimate kinase, found in Methanococcus vannielii (strain ATCC 35089 / DSM 1224 / JCM 13029 / OCM 148 / SB).